The primary structure comprises 423 residues: UDP-N-acetylglucosamine 1-carboxyvinyltransferase 2 (423 aa).

23 to 24 (KN) contacts phosphoenolpyruvate. Arg93 contributes to the UDP-N-acetyl-alpha-D-glucosamine binding site. Cys117 functions as the Proton donor in the catalytic mechanism. Position 117 is a 2-(S-cysteinyl)pyruvic acid O-phosphothioketal (Cys117). Residues 122–126 (RPIDQ), Asp305, and Ile327 each bind UDP-N-acetyl-alpha-D-glucosamine.

The protein belongs to the EPSP synthase family. MurA subfamily.

The protein localises to the cytoplasm. The catalysed reaction is phosphoenolpyruvate + UDP-N-acetyl-alpha-D-glucosamine = UDP-N-acetyl-3-O-(1-carboxyvinyl)-alpha-D-glucosamine + phosphate. The protein operates within cell wall biogenesis; peptidoglycan biosynthesis. In terms of biological role, cell wall formation. Adds enolpyruvyl to UDP-N-acetylglucosamine. This Listeria monocytogenes serovar 1/2a (strain ATCC BAA-679 / EGD-e) protein is UDP-N-acetylglucosamine 1-carboxyvinyltransferase 2.